Consider the following 230-residue polypeptide: Probable caffeoyl-CoA O-methyltransferase 1 (230 aa).

S-adenosyl-L-methionine is bound by residues Thr52, Asp74, 76–77, Ser82, Asp100, Ala129, Asp151, Asp153, and Tyr160; that span reads GV. Asp151 serves as a coordination point for a divalent metal cation. A divalent metal cation is bound by residues Asp177 and Asn178.

This sequence belongs to the class I-like SAM-binding methyltransferase superfamily. Cation-dependent O-methyltransferase family. CCoAMT subfamily.

The enzyme catalyses (E)-caffeoyl-CoA + S-adenosyl-L-methionine = (E)-feruloyl-CoA + S-adenosyl-L-homocysteine + H(+). This is Probable caffeoyl-CoA O-methyltransferase 1 (omt5) from Dictyostelium discoideum (Social amoeba).